A 206-amino-acid polypeptide reads, in one-letter code: Apoptosis regulator OPG045 (206 aa).

Belongs to the orthopoxvirus OPG045 family. Homodimer. Interacts with host pro-apoptotic protein BCL2L11 (via BH3 domain). Interacts with host NLRP1. Interacts with host BAK.

It is found in the host mitochondrion outer membrane. The protein resides in the host cytoplasm. In terms of biological role, plays a role in evading host innate immune response by inhibiting host inflammasome activation. Interacts with and inhibits NLR-mediated interleukin-1 beta/IL1B production in infected cells. At the host mitochondria outer membrane, interacts with the BH3 domain of host BAK and prevents BAK from binding active BAX. In turn, host apoptosis is inhibited. The chain is Apoptosis regulator OPG045 (OPG045) from Vaccinia virus (strain L-IVP) (VACV).